We begin with the raw amino-acid sequence, 300 residues long: GTPase Era (300 aa).

Residues 8 to 176 (RCGYVAIVGR…ESLIASHLPE (169 aa)) form the Era-type G domain. The G1 stretch occupies residues 16–23 (GRPNVGKS). 16-23 (GRPNVGKS) is a GTP binding site. Residues 42 to 46 (QTTRH) are G2. Residues 63–66 (DTPG) are G3. GTP-binding positions include 63–67 (DTPGM) and 125–128 (NKTD). The tract at residues 125–128 (NKTD) is G4. The G5 stretch occupies residues 155 to 157 (ISA). The KH type-2 domain maps to 199–283 (VREKIMRQLG…MLNLWVKVKG (85 aa)).

Belongs to the TRAFAC class TrmE-Era-EngA-EngB-Septin-like GTPase superfamily. Era GTPase family. Monomer.

Its subcellular location is the cytoplasm. It is found in the cell inner membrane. Its function is as follows. An essential GTPase that binds both GDP and GTP, with rapid nucleotide exchange. Plays a role in 16S rRNA processing and 30S ribosomal subunit biogenesis and possibly also in cell cycle regulation and energy metabolism. The chain is GTPase Era from Pseudomonas savastanoi pv. phaseolicola (strain 1448A / Race 6) (Pseudomonas syringae pv. phaseolicola (strain 1448A / Race 6)).